An 848-amino-acid chain; its full sequence is Crooked neck-like protein 1 (848 aa).

T2 bears the N-acetylalanine mark. Residues 81 to 106 (RSSRTPHSTRCRKEDAQPGHHGNGAA) form a disordered region. 17 HAT repeats span residues 222-254 (DYKL…WEES), 256-288 (KEIQ…MEMK), 290-322 (RQVN…MEEM), 324-355 (GNVA…FELR), 357-388 (KEVD…FEEK), 390-425 (AYFA…FEEN), 427-461 (KEFE…FEKK), 471-503 (IIVS…LVES), 505-539 (AEAE…LWIN), 549-585 (KDPE…FEIR), 587-618 (KNLS…LELQ), 620-652 (REFD…LETI), 654-688 (GDID…FEIE), 690-721 (EETE…FELS), 726-767 (GSLT…EFGT), 769-807 (SDKE…YIFP), and 809-834 (DAAN…EKED). The interval 411–628 (MDEHLYVAFA…LREFDRCRKL (218 aa)) is mediates interaction with HSP90. S503 bears the Phosphoserine mark. The tract at residues 827–848 (KQQQEKEDAEHHPDEDVDESES) is disordered. Positions 828-840 (QQQEKEDAEHHPD) are enriched in basic and acidic residues.

The protein belongs to the crooked-neck family. As to quaternary structure, identified in the spliceosome C complex. Present in a spliceosome complex assembled in vitro containing CRNKL1, HPRP8BP and SNRPB2. Component of the minor spliceosome, which splices U12-type introns. Isoform 2 seems to be predominant in the spliceosome complex. Interacts with PPIL2 (via the PPIase cyclophilin-type domain); they may form a trimeric complex with HSP90. In terms of tissue distribution, widely expressed. Highly expressed in testis. Not detected in brain and lung.

It is found in the nucleus. The protein resides in the nucleus speckle. In terms of biological role, involved in pre-mRNA splicing process. As a component of the minor spliceosome, involved in the splicing of U12-type introns in pre-mRNAs. In Homo sapiens (Human), this protein is Crooked neck-like protein 1 (CRNKL1).